A 452-amino-acid polypeptide reads, in one-letter code: Na(+)/H(+) antiporter NhaA (452 aa).

11 helical membrane passes run phenylalanine 27–leucine 47, phenylalanine 67–methionine 87, alanine 108–phenylalanine 128, glycine 137–glycine 157, valine 166–phenylalanine 186, leucine 194–valine 214, serine 216–isoleucine 236, proline 314–serine 334, glycine 343–leucine 363, tryptophan 381–isoleucine 401, and valine 414–isoleucine 434.

It belongs to the NhaA Na(+)/H(+) (TC 2.A.33) antiporter family.

The protein resides in the cell inner membrane. It carries out the reaction Na(+)(in) + 2 H(+)(out) = Na(+)(out) + 2 H(+)(in). In terms of biological role, na(+)/H(+) antiporter that extrudes sodium in exchange for external protons. This chain is Na(+)/H(+) antiporter NhaA, found in Wolinella succinogenes (strain ATCC 29543 / DSM 1740 / CCUG 13145 / JCM 31913 / LMG 7466 / NCTC 11488 / FDC 602W) (Vibrio succinogenes).